Consider the following 401-residue polypeptide: Argininosuccinate synthase (401 aa).

Position 9 to 17 (9 to 17 (AYSGGLDTS)) interacts with ATP. Y86 serves as a coordination point for L-citrulline. Residue G116 coordinates ATP. 3 residues coordinate L-aspartate: T118, N122, and D123. Position 122 (N122) interacts with L-citrulline. 5 residues coordinate L-citrulline: R126, S174, S183, E259, and Y271.

This sequence belongs to the argininosuccinate synthase family. Type 1 subfamily. In terms of assembly, homotetramer.

It is found in the cytoplasm. The enzyme catalyses L-citrulline + L-aspartate + ATP = 2-(N(omega)-L-arginino)succinate + AMP + diphosphate + H(+). The protein operates within amino-acid biosynthesis; L-arginine biosynthesis; L-arginine from L-ornithine and carbamoyl phosphate: step 2/3. This is Argininosuccinate synthase from Bacillus cytotoxicus (strain DSM 22905 / CIP 110041 / 391-98 / NVH 391-98).